A 574-amino-acid chain; its full sequence is ATP-dependent lipid A-core flippase (574 aa).

4 consecutive transmembrane segments (helical) span residues 11–31, 60–80, 156–176, and 244–264; these read LLSY…GFGI, WFPL…FMGG, YTNW…GVLV, and LNSP…VWLA. The region spanning 23 to 304 is the ABC transmembrane type-1 domain; it reads LLVLVGFGIN…LTDVNEKLQR (282 aa). The region spanning 335–570 is the ABC transporter domain; it reads VRFDHVTLEY…QGAYFQLHQR (236 aa). 368 to 375 is a binding site for ATP; that stretch reads GRSGAGKT.

It belongs to the ABC transporter superfamily. Lipid exporter (TC 3.A.1.106) family. Homodimer.

Its subcellular location is the cell inner membrane. It catalyses the reaction ATP + H2O + lipid A-core oligosaccharideSide 1 = ADP + phosphate + lipid A-core oligosaccharideSide 2.. Involved in lipopolysaccharide (LPS) biosynthesis. Translocates lipid A-core from the inner to the outer leaflet of the inner membrane. Transmembrane domains (TMD) form a pore in the inner membrane and the ATP-binding domain (NBD) is responsible for energy generation. The protein is ATP-dependent lipid A-core flippase of Acinetobacter baylyi (strain ATCC 33305 / BD413 / ADP1).